Reading from the N-terminus, the 351-residue chain is UDP-N-acetylglucosamine--N-acetylmuramyl-(pentapeptide) pyrophosphoryl-undecaprenol N-acetylglucosamine transferase (351 aa).

UDP-N-acetyl-alpha-D-glucosamine-binding positions include Thr-13–Gly-15, Asn-125, Arg-161, Ser-189, Ile-241, Ala-260–Glu-265, and Gln-285.

The protein belongs to the glycosyltransferase 28 family. MurG subfamily.

Its subcellular location is the cell inner membrane. The catalysed reaction is di-trans,octa-cis-undecaprenyl diphospho-N-acetyl-alpha-D-muramoyl-L-alanyl-D-glutamyl-meso-2,6-diaminopimeloyl-D-alanyl-D-alanine + UDP-N-acetyl-alpha-D-glucosamine = di-trans,octa-cis-undecaprenyl diphospho-[N-acetyl-alpha-D-glucosaminyl-(1-&gt;4)]-N-acetyl-alpha-D-muramoyl-L-alanyl-D-glutamyl-meso-2,6-diaminopimeloyl-D-alanyl-D-alanine + UDP + H(+). It participates in cell wall biogenesis; peptidoglycan biosynthesis. Its function is as follows. Cell wall formation. Catalyzes the transfer of a GlcNAc subunit on undecaprenyl-pyrophosphoryl-MurNAc-pentapeptide (lipid intermediate I) to form undecaprenyl-pyrophosphoryl-MurNAc-(pentapeptide)GlcNAc (lipid intermediate II). The polypeptide is UDP-N-acetylglucosamine--N-acetylmuramyl-(pentapeptide) pyrophosphoryl-undecaprenol N-acetylglucosamine transferase (Haemophilus influenzae (strain 86-028NP)).